The sequence spans 543 residues: ABC transport system permease protein p69 (543 aa).

Transmembrane regions (helical) follow at residues 18 to 38, 78 to 98, 115 to 135, 141 to 161, 211 to 231, 237 to 257, 288 to 308, 354 to 374, 379 to 399, 413 to 433, 482 to 502, and 510 to 530; these read IWYW…YSWI, AFFV…FSYW, ITIV…SNLF, ATLT…TTFF, TLLS…PLSI, LVLI…VVVF, IIFI…LVTI, ISLI…SCNL, FSIS…ILLF, IILV…SINF, LILF…NFFE, and GSVT…FLSV. In terms of domain architecture, ABC transmembrane type-1 spans 74–256; the sequence is LAQTAFFVTG…TFLIFIEVVV (183 aa).

This sequence belongs to the binding-protein-dependent transport system permease family.

It localises to the cell membrane. Functionally, probably part of a high-affinity transport system. The polypeptide is ABC transport system permease protein p69 (p69) (Mycoplasma genitalium (strain ATCC 33530 / DSM 19775 / NCTC 10195 / G37) (Mycoplasmoides genitalium)).